The chain runs to 134 residues: Small ribosomal subunit protein uS11 (134 aa).

Belongs to the universal ribosomal protein uS11 family. As to quaternary structure, part of the 30S ribosomal subunit. Interacts with proteins S7 and S18. Binds to IF-3.

Located on the platform of the 30S subunit, it bridges several disparate RNA helices of the 16S rRNA. Forms part of the Shine-Dalgarno cleft in the 70S ribosome. The polypeptide is Small ribosomal subunit protein uS11 (Janthinobacterium sp. (strain Marseille) (Minibacterium massiliensis)).